The sequence spans 527 residues: Peptide chain release factor 3 (527 aa).

The 269-residue stretch at alanine 9–leucine 277 folds into the tr-type G domain. GTP is bound by residues serine 18–threonine 25, aspartate 86–histidine 90, and asparagine 140–aspartate 143.

It belongs to the TRAFAC class translation factor GTPase superfamily. Classic translation factor GTPase family. PrfC subfamily.

It is found in the cytoplasm. Increases the formation of ribosomal termination complexes and stimulates activities of RF-1 and RF-2. It binds guanine nucleotides and has strong preference for UGA stop codons. It may interact directly with the ribosome. The stimulation of RF-1 and RF-2 is significantly reduced by GTP and GDP, but not by GMP. In Pseudomonas entomophila (strain L48), this protein is Peptide chain release factor 3.